Reading from the N-terminus, the 181-residue chain is Protein CRABS CLAW (181 aa).

A C4-type zinc finger spans residues 26-53 (CSICNTILAVGIPLKRMLDTVTVKCGHC). The segment at 80-122 (GSDYKKGSSSSSSSSTSSDQPPSPSPPFVVKPPEKKQRLPSAY) is disordered. The segment covering 87 to 99 (SSSSSSSSTSSDQ) has biased composition (low complexity). The span at 100–109 (PPSPSPPFVV) shows a compositional bias: pro residues.

The protein belongs to the YABBY family. As to expression, restricted to flowers, mostly in carpels and nectaries. Expressed at low levels in sepal primordia (buds), sepal receptacle and developing petal. Not detected in placental tissues, septum, stigma and ovules.

It localises to the nucleus. Transcription factor required for the initiation of nectary development. Also involved in suppressing early radial growth of the gynoecium, in promoting its later elongation and in fusion of its carpels by regulating both cell division and expansion. Establishes the polar differentiation in the carpels by specifying abaxial cell fate in the ovary wall. Regulates both cell division and expansion. This Arabidopsis thaliana (Mouse-ear cress) protein is Protein CRABS CLAW.